A 383-amino-acid chain; its full sequence is Mannitol-1-phosphate 5-dehydrogenase (383 aa).

3-14 (AVHFGAGNIGRG) is an NAD(+) binding site.

This sequence belongs to the mannitol dehydrogenase family.

It carries out the reaction D-mannitol 1-phosphate + NAD(+) = beta-D-fructose 6-phosphate + NADH + H(+). This Lacticaseibacillus casei (strain BL23) (Lactobacillus casei) protein is Mannitol-1-phosphate 5-dehydrogenase.